Reading from the N-terminus, the 196-residue chain is Probable cobalt-precorrin-6B C(15)-methyltransferase (decarboxylating) (196 aa).

Residues threonine 24, 48–52 (GCGTG), aspartate 72, and alanine 101 contribute to the S-adenosyl-L-methionine site.

This sequence belongs to the methyltransferase superfamily. Archaeal-type CbiT family.

The catalysed reaction is Co-precorrin-6B + S-adenosyl-L-methionine = Co-precorrin-7 + S-adenosyl-L-homocysteine + CO2. It functions in the pathway cofactor biosynthesis; adenosylcobalamin biosynthesis; cob(II)yrinate a,c-diamide from sirohydrochlorin (anaerobic route): step 8/10. In terms of biological role, catalyzes the methylation of C-15 in cobalt-precorrin-6B followed by the decarboxylation of C-12 to form cobalt-precorrin-7. The sequence is that of Probable cobalt-precorrin-6B C(15)-methyltransferase (decarboxylating) from Pyrobaculum aerophilum (strain ATCC 51768 / DSM 7523 / JCM 9630 / CIP 104966 / NBRC 100827 / IM2).